A 95-amino-acid polypeptide reads, in one-letter code: MAIDAATVRKVARLARIATPEDRLEPLAQELNGIMTWIEQLAQVDTDGVEPLTSVVHAGLPLREDVVTMGGDADLITANAPKSTGGFFVVPKVVE.

Belongs to the GatC family. In terms of assembly, heterotrimer of A, B and C subunits.

The catalysed reaction is L-glutamyl-tRNA(Gln) + L-glutamine + ATP + H2O = L-glutaminyl-tRNA(Gln) + L-glutamate + ADP + phosphate + H(+). It carries out the reaction L-aspartyl-tRNA(Asn) + L-glutamine + ATP + H2O = L-asparaginyl-tRNA(Asn) + L-glutamate + ADP + phosphate + 2 H(+). Its function is as follows. Allows the formation of correctly charged Asn-tRNA(Asn) or Gln-tRNA(Gln) through the transamidation of misacylated Asp-tRNA(Asn) or Glu-tRNA(Gln) in organisms which lack either or both of asparaginyl-tRNA or glutaminyl-tRNA synthetases. The reaction takes place in the presence of glutamine and ATP through an activated phospho-Asp-tRNA(Asn) or phospho-Glu-tRNA(Gln). This Caulobacter sp. (strain K31) protein is Aspartyl/glutamyl-tRNA(Asn/Gln) amidotransferase subunit C.